Here is a 423-residue protein sequence, read N- to C-terminus: Putative competence-damage inducible protein (423 aa).

It belongs to the CinA family.

This Streptococcus thermophilus (strain ATCC BAA-491 / LMD-9) protein is Putative competence-damage inducible protein.